The following is a 278-amino-acid chain: Dermonecrotic toxin LhSicTox-alphaIV1iii (278 aa).

His-5 is an active-site residue. Mg(2+)-binding residues include Glu-25 and Asp-27. The active-site Nucleophile is the His-41. Disulfide bonds link Cys-45–Cys-51 and Cys-47–Cys-192. Residue Asp-85 coordinates Mg(2+).

Belongs to the arthropod phospholipase D family. Class II subfamily. The cofactor is Mg(2+). Expressed by the venom gland.

It is found in the secreted. It carries out the reaction an N-(acyl)-sphingosylphosphocholine = an N-(acyl)-sphingosyl-1,3-cyclic phosphate + choline. The catalysed reaction is an N-(acyl)-sphingosylphosphoethanolamine = an N-(acyl)-sphingosyl-1,3-cyclic phosphate + ethanolamine. It catalyses the reaction a 1-acyl-sn-glycero-3-phosphocholine = a 1-acyl-sn-glycero-2,3-cyclic phosphate + choline. The enzyme catalyses a 1-acyl-sn-glycero-3-phosphoethanolamine = a 1-acyl-sn-glycero-2,3-cyclic phosphate + ethanolamine. In terms of biological role, dermonecrotic toxins cleave the phosphodiester linkage between the phosphate and headgroup of certain phospholipids (sphingolipid and lysolipid substrates), forming an alcohol (often choline) and a cyclic phosphate. This toxin acts on sphingomyelin (SM). It may also act on ceramide phosphoethanolamine (CPE), lysophosphatidylcholine (LPC) and lysophosphatidylethanolamine (LPE), but not on lysophosphatidylserine (LPS), and lysophosphatidylglycerol (LPG). It acts by transphosphatidylation, releasing exclusively cyclic phosphate products as second products. Induces dermonecrosis, hemolysis, increased vascular permeability, edema, inflammatory response, and platelet aggregation. The chain is Dermonecrotic toxin LhSicTox-alphaIV1iii from Loxosceles hirsuta (Recluse spider).